The primary structure comprises 247 residues: MAQQVSGRQPRYKRILLKLSGEALMGSEDFGIDPKVLDRMALEVGQLVGIGVQVGLVIGGGNLFRGAALSAAGMDRVTGDHMGMLATVMNGLAMRDALERSNIPALVMSAISMVGVTDHYDRRKAIRHLNSGDVVIFSAGTGNPFFTTDSAACLRAIEIDADVVLKATKVDGVYTADPFKDPHAEKFDHLTYDEVLDRKLGVMDLTAICLCRDHKMPLRVFNMNKPGALLNIVVGGAEGTLIEEGQA.

18–21 contributes to the ATP binding site; it reads KLSG. UMP is bound at residue Gly60. ATP-binding residues include Gly61 and Arg65. UMP-binding positions include Asp80 and 141–148; that span reads TGNPFFTT. Positions 168, 174, and 177 each coordinate ATP.

Belongs to the UMP kinase family. In terms of assembly, homohexamer.

The protein localises to the cytoplasm. The enzyme catalyses UMP + ATP = UDP + ADP. Its pathway is pyrimidine metabolism; CTP biosynthesis via de novo pathway; UDP from UMP (UMPK route): step 1/1. Inhibited by UTP. Functionally, catalyzes the reversible phosphorylation of UMP to UDP. This Pseudomonas putida (strain ATCC 47054 / DSM 6125 / CFBP 8728 / NCIMB 11950 / KT2440) protein is Uridylate kinase.